Reading from the N-terminus, the 188-residue chain is Archaemetzincin (188 aa).

Histidine 137 is a Zn(2+) binding site. The active-site Proton acceptor is glutamate 138. Zn(2+) contacts are provided by histidine 141, histidine 147, cysteine 148, cysteine 153, cysteine 172, and cysteine 175.

The protein belongs to the peptidase M54 family. As to quaternary structure, monomer. Requires Zn(2+) as cofactor.

Functionally, probable zinc metalloprotease whose natural substrate is unknown. In Pyrococcus abyssi (strain GE5 / Orsay), this protein is Archaemetzincin.